Reading from the N-terminus, the 118-residue chain is Non-specific lipid-transfer protein 2 (118 aa).

The signal sequence occupies residues 1–25 (MAGVMKLACMVLACMIVAGPITANA). 4 disulfides stabilise this stretch: Cys29-Cys76, Cys39-Cys53, Cys54-Cys100, and Cys74-Cys114.

Belongs to the plant LTP family.

In terms of biological role, plant non-specific lipid-transfer proteins transfer phospholipids as well as galactolipids across membranes. May play a role in wax or cutin deposition in the cell walls of expanding epidermal cells and certain secretory tissues. This chain is Non-specific lipid-transfer protein 2 (LTP2), found in Arabidopsis thaliana (Mouse-ear cress).